The chain runs to 985 residues: Translation initiation factor IF-2 (985 aa).

3 stretches are compositionally biased toward basic and acidic residues: residues Gln-49–Ser-58, Ile-65–Asn-89, and Val-99–Lys-113. A disordered region spans residues Gln-49 to Asp-401. Over residues Ser-125–Thr-136 the composition is skewed to polar residues. The segment covering Ala-137–Arg-162 has biased composition (low complexity). 2 stretches are compositionally biased toward gly residues: residues Pro-180–Arg-246 and Pro-288–Arg-324. Residues Lys-349–Lys-377 are compositionally biased toward basic and acidic residues. The span at Leu-378–His-391 shows a compositional bias: basic residues. Positions Leu-485–Lys-654 constitute a tr-type G domain. A G1 region spans residues Gly-494 to Thr-501. Gly-494 to Thr-501 provides a ligand contact to GTP. A G2 region spans residues Gly-519 to His-523. Positions Asp-540–Gly-543 are G3. GTP is bound by residues Asp-540–His-544 and Asn-594–Asp-597. The tract at residues Asn-594–Asp-597 is G4. The tract at residues Ser-630–Lys-632 is G5.

Belongs to the TRAFAC class translation factor GTPase superfamily. Classic translation factor GTPase family. IF-2 subfamily.

The protein resides in the cytoplasm. Its function is as follows. One of the essential components for the initiation of protein synthesis. Protects formylmethionyl-tRNA from spontaneous hydrolysis and promotes its binding to the 30S ribosomal subunits. Also involved in the hydrolysis of GTP during the formation of the 70S ribosomal complex. The protein is Translation initiation factor IF-2 of Desulforamulus reducens (strain ATCC BAA-1160 / DSM 100696 / MI-1) (Desulfotomaculum reducens).